Reading from the N-terminus, the 182-residue chain is Crossover junction endodeoxyribonuclease RuvC (182 aa).

Active-site residues include D7, E67, and D139. Mg(2+)-binding residues include D7, E67, and D139.

The protein belongs to the RuvC family. Homodimer which binds Holliday junction (HJ) DNA. The HJ becomes 2-fold symmetrical on binding to RuvC with unstacked arms; it has a different conformation from HJ DNA in complex with RuvA. In the full resolvosome a probable DNA-RuvA(4)-RuvB(12)-RuvC(2) complex forms which resolves the HJ. Requires Mg(2+) as cofactor.

It is found in the cytoplasm. The enzyme catalyses Endonucleolytic cleavage at a junction such as a reciprocal single-stranded crossover between two homologous DNA duplexes (Holliday junction).. Its function is as follows. The RuvA-RuvB-RuvC complex processes Holliday junction (HJ) DNA during genetic recombination and DNA repair. Endonuclease that resolves HJ intermediates. Cleaves cruciform DNA by making single-stranded nicks across the HJ at symmetrical positions within the homologous arms, yielding a 5'-phosphate and a 3'-hydroxyl group; requires a central core of homology in the junction. The consensus cleavage sequence is 5'-(A/T)TT(C/G)-3'. Cleavage occurs on the 3'-side of the TT dinucleotide at the point of strand exchange. HJ branch migration catalyzed by RuvA-RuvB allows RuvC to scan DNA until it finds its consensus sequence, where it cleaves and resolves the cruciform DNA. The chain is Crossover junction endodeoxyribonuclease RuvC from Bordetella pertussis (strain Tohama I / ATCC BAA-589 / NCTC 13251).